Consider the following 420-residue polypeptide: Trophoblast glycoprotein (420 aa).

The signal sequence occupies residues 1–34 (MPGGCSRGPAAGDGRLRLARLALVLLGWVSSSSS). At 35 to 355 (TSSASSSSSS…PILPPSLQTS (321 aa)) the chain is on the extracellular side. The 39-residue stretch at 53–91 (SAQPPLPDQCPALCECSEAARTVKCVNRNLTEVPTDLPL) folds into the LRRNT domain. Cystine bridges form between Cys62–Cys68 and Cys66–Cys77. An N-linked (GlcNAc...) asparagine glycan is attached at Asn81. LRR repeat units lie at residues 92–113 (YVRN…AFAR), 116–139 (PLAE…GAFE), 141–163 (LPSL…FAFS), 172–204 (PSPL…AALV), 209–232 (LQGL…VLAQ), 233–255 (LPSL…VSFR), and 256–275 (NLTH…VLHN). Asn124 carries an N-linked (GlcNAc...) asparagine glycan. Asn275 carries an N-linked (GlcNAc...) asparagine glycan. The LRRCT domain occupies 283 to 346 (GLPHVRVFLD…LNSADLDCDP (64 aa)). Disulfide bonds link Cys298/Cys323 and Cys300/Cys344. A helical membrane pass occupies residues 356–376 (YVFLGIVLALIGAIFLLVLYL). Topologically, residues 377–420 (NRKGIKKWMHNIRDACRDHMEGYHYRYEINADPRLTNLSSNSDV) are cytoplasmic. Ser418 carries the post-translational modification Phosphoserine.

Post-translationally, highly glycosylated.

The protein resides in the cell membrane. Functionally, may function as an inhibitor of Wnt/beta-catenin signaling by indirectly interacting with LRP6 and blocking Wnt3a-dependent LRP6 internalization. This is Trophoblast glycoprotein (TPBG) from Macaca fascicularis (Crab-eating macaque).